Reading from the N-terminus, the 275-residue chain is Small ribosomal subunit protein uS3 (275 aa).

The KH type-2 domain occupies 39–107 (VRIYLKKKLK…PVHVNIEEIR (69 aa)). Residues 216-275 (AAATSAEPAAEEKKTRRAPSKTAARKPAAGTDKPLVAAKPAVKRVRKVETPAADTQKSGE) are disordered.

Belongs to the universal ribosomal protein uS3 family. As to quaternary structure, part of the 30S ribosomal subunit. Forms a tight complex with proteins S10 and S14.

In terms of biological role, binds the lower part of the 30S subunit head. Binds mRNA in the 70S ribosome, positioning it for translation. The polypeptide is Small ribosomal subunit protein uS3 (Polynucleobacter asymbioticus (strain DSM 18221 / CIP 109841 / QLW-P1DMWA-1) (Polynucleobacter necessarius subsp. asymbioticus)).